A 290-amino-acid chain; its full sequence is Nucleotide-binding protein Aave_3603 (290 aa).

Residue 13–20 participates in ATP binding; that stretch reads GMSGSGKS. A GTP-binding site is contributed by 62 to 65; the sequence is DVRS.

The protein belongs to the RapZ-like family.

Functionally, displays ATPase and GTPase activities. This is Nucleotide-binding protein Aave_3603 from Paracidovorax citrulli (strain AAC00-1) (Acidovorax citrulli).